The following is a 127-amino-acid chain: Large ribosomal subunit protein bL17 (127 aa).

This sequence belongs to the bacterial ribosomal protein bL17 family. As to quaternary structure, part of the 50S ribosomal subunit. Contacts protein L32.

In Lactobacillus delbrueckii subsp. bulgaricus (strain ATCC 11842 / DSM 20081 / BCRC 10696 / JCM 1002 / NBRC 13953 / NCIMB 11778 / NCTC 12712 / WDCM 00102 / Lb 14), this protein is Large ribosomal subunit protein bL17.